The sequence spans 85 residues: Large ribosomal subunit protein bL27 (85 aa).

Residues 1-22 (MAHKKGQGSTQNNRDSAGRRLG) form a disordered region.

Belongs to the bacterial ribosomal protein bL27 family.

The polypeptide is Large ribosomal subunit protein bL27 (Sulfurimonas denitrificans (strain ATCC 33889 / DSM 1251) (Thiomicrospira denitrificans (strain ATCC 33889 / DSM 1251))).